A 325-amino-acid polypeptide reads, in one-letter code: L-lactate dehydrogenase 1 (325 aa).

Residues Val-17, Asp-38, Lys-43, Tyr-68, and 82-83 (GA) contribute to the NAD(+) site. Residues Gln-85, Arg-91, and 123–126 (NPVD) each bind substrate. Residues 121-123 (AAN) and Ser-146 contribute to the NAD(+) site. Residue 151–154 (DTAR) participates in substrate binding. Beta-D-fructose 1,6-bisphosphate is bound by residues Arg-156 and His-171. His-178 functions as the Proton acceptor in the catalytic mechanism. Phosphotyrosine is present on Tyr-223. Thr-232 contacts substrate.

It belongs to the LDH/MDH superfamily. LDH family. In terms of assembly, homotetramer.

It is found in the cytoplasm. It carries out the reaction (S)-lactate + NAD(+) = pyruvate + NADH + H(+). The protein operates within fermentation; pyruvate fermentation to lactate; (S)-lactate from pyruvate: step 1/1. Allosterically activated by fructose 1,6-bisphosphate (FBP). In terms of biological role, catalyzes the conversion of lactate to pyruvate. This chain is L-lactate dehydrogenase 1, found in Lactococcus lactis subsp. lactis (strain IL1403) (Streptococcus lactis).